A 418-amino-acid chain; its full sequence is Serine hydroxymethyltransferase (418 aa).

Residues L121 and 125–127 each bind (6S)-5,6,7,8-tetrahydrofolate; that span reads GHL. K230 bears the N6-(pyridoxal phosphate)lysine mark. Position 356–358 (356–358) interacts with (6S)-5,6,7,8-tetrahydrofolate; it reads SPF.

Belongs to the SHMT family. Homodimer. The cofactor is pyridoxal 5'-phosphate.

It is found in the cytoplasm. The enzyme catalyses (6R)-5,10-methylene-5,6,7,8-tetrahydrofolate + glycine + H2O = (6S)-5,6,7,8-tetrahydrofolate + L-serine. Its pathway is one-carbon metabolism; tetrahydrofolate interconversion. It participates in amino-acid biosynthesis; glycine biosynthesis; glycine from L-serine: step 1/1. Catalyzes the reversible interconversion of serine and glycine with tetrahydrofolate (THF) serving as the one-carbon carrier. This reaction serves as the major source of one-carbon groups required for the biosynthesis of purines, thymidylate, methionine, and other important biomolecules. Also exhibits THF-independent aldolase activity toward beta-hydroxyamino acids, producing glycine and aldehydes, via a retro-aldol mechanism. In Alteromonas mediterranea (strain DSM 17117 / CIP 110805 / LMG 28347 / Deep ecotype), this protein is Serine hydroxymethyltransferase.